The chain runs to 96 residues: Antigen H4 (96 aa).

The disordered stretch occupies residues 1–20 (EFQEEIKEGVEEHKHEDDPE). An N-linked (GlcNAc...) asparagine glycan is attached at asparagine 34.

The polypeptide is Antigen H4 (H4) (Toxoplasma gondii).